A 130-amino-acid chain; its full sequence is Small ribosomal subunit protein uS8 (130 aa).

The protein belongs to the universal ribosomal protein uS8 family. As to quaternary structure, part of the 30S ribosomal subunit.

Functionally, one of the primary rRNA binding proteins, it binds directly to 16S rRNA central domain where it helps coordinate assembly of the platform of the 30S subunit. This is Small ribosomal subunit protein uS8 from Pyrobaculum calidifontis (strain DSM 21063 / JCM 11548 / VA1).